The following is a 124-amino-acid chain: Large ribosomal subunit protein bL12 (124 aa).

It belongs to the bacterial ribosomal protein bL12 family. As to quaternary structure, homodimer. Part of the ribosomal stalk of the 50S ribosomal subunit. Forms a multimeric L10(L12)X complex, where L10 forms an elongated spine to which 2 to 4 L12 dimers bind in a sequential fashion. Binds GTP-bound translation factors.

Functionally, forms part of the ribosomal stalk which helps the ribosome interact with GTP-bound translation factors. Is thus essential for accurate translation. The polypeptide is Large ribosomal subunit protein bL12 (Nitrosomonas europaea (strain ATCC 19718 / CIP 103999 / KCTC 2705 / NBRC 14298)).